Consider the following 344-residue polypeptide: Mitochondrial substrate carrier family protein D (344 aa).

At 1-22 the chain is on the mitochondrial intermembrane side; that stretch reads MDSTKTNNKWAAAGILNSVGKD. Solcar repeat units follow at residues 17-104, 119-212, and 239-327; these read NSVG…CQSY, IPYH…MKRK, and VPAW…TRNL. The chain crosses the membrane as a helical span at residues 23 to 43; sequence FVAGSVGGMSSIMAGHPFDTI. The Mitochondrial matrix portion of the chain corresponds to 44–75; the sequence is KVMLQDASGNLPKFKNGFQALKYIMKVDGIKG. A helical transmembrane segment spans residues 76–96; sequence IYRGLSVPLFSVSFTNSVFFA. Residues 97-116 are Mitochondrial intermembrane-facing; it reads TNNFCQSYFHPPCKDENGED. The chain crosses the membrane as a helical span at residues 117–137; that stretch reads ILIPYHKAAAAGAIAGGVISL. Residues 138-186 are Mitochondrial matrix-facing; that stretch reads LITPRDLVKSKLQVQCRPFGSTNVSLQYKGPIDVIRQTIKRDGIKGMFK. A helical membrane pass occupies residues 187-207; that stretch reads GIRSTFCRDIPGDAVYFVVYE. At 208–238 the chain is on the mitochondrial intermembrane side; that stretch reads FMKRKLLALSKNNNNNNNNNDNNDNSSPKAG. The helical transmembrane segment at 239 to 259 threads the bilayer; it reads VPAWVAIGAGGCAGMSFWMSI. Residues 260–301 lie on the Mitochondrial matrix side of the membrane; it reads YPMDVVKTRIQTQPDHLPPQYTSVLQTITKIYREEGISVFFR. The chain crosses the membrane as a helical span at residues 302-321; that stretch reads GFSATILRAFPTSAVNFLMY. Residues 322 to 344 lie on the Mitochondrial intermembrane side of the membrane; that stretch reads ETTRNLLNSKDPFYNNNDHYNAE.

This sequence belongs to the mitochondrial carrier (TC 2.A.29) family.

Its subcellular location is the mitochondrion inner membrane. Functionally, calcium-dependent mitochondrial solute carrier. Mitochondrial solute carriers shuttle metabolites, nucleotides, and cofactors through the mitochondrial inner membrane. The sequence is that of Mitochondrial substrate carrier family protein D (mcfD) from Dictyostelium discoideum (Social amoeba).